The sequence spans 493 residues: Guanosine-5'-triphosphate,3'-diphosphate pyrophosphatase (493 aa).

Belongs to the GppA/Ppx family. GppA subfamily.

It catalyses the reaction guanosine 3'-diphosphate 5'-triphosphate + H2O = guanosine 3',5'-bis(diphosphate) + phosphate + H(+). It functions in the pathway purine metabolism; ppGpp biosynthesis; ppGpp from GTP: step 2/2. Its function is as follows. Catalyzes the conversion of pppGpp to ppGpp. Guanosine pentaphosphate (pppGpp) is a cytoplasmic signaling molecule which together with ppGpp controls the 'stringent response', an adaptive process that allows bacteria to respond to amino acid starvation, resulting in the coordinated regulation of numerous cellular activities. This chain is Guanosine-5'-triphosphate,3'-diphosphate pyrophosphatase, found in Salmonella agona (strain SL483).